The primary structure comprises 435 residues: Serine--tRNA ligase (435 aa).

241–243 (TAE) provides a ligand contact to L-serine. 272–274 (RSE) is a binding site for ATP. Glu-295 is an L-serine binding site. ATP is bound at residue 359 to 362 (EISS). L-serine is bound at residue Ser-395.

The protein belongs to the class-II aminoacyl-tRNA synthetase family. Type-1 seryl-tRNA synthetase subfamily. Homodimer. The tRNA molecule binds across the dimer.

Its subcellular location is the cytoplasm. The enzyme catalyses tRNA(Ser) + L-serine + ATP = L-seryl-tRNA(Ser) + AMP + diphosphate + H(+). It catalyses the reaction tRNA(Sec) + L-serine + ATP = L-seryl-tRNA(Sec) + AMP + diphosphate + H(+). Its pathway is aminoacyl-tRNA biosynthesis; selenocysteinyl-tRNA(Sec) biosynthesis; L-seryl-tRNA(Sec) from L-serine and tRNA(Sec): step 1/1. Catalyzes the attachment of serine to tRNA(Ser). Is also able to aminoacylate tRNA(Sec) with serine, to form the misacylated tRNA L-seryl-tRNA(Sec), which will be further converted into selenocysteinyl-tRNA(Sec). In Actinobacillus pleuropneumoniae serotype 7 (strain AP76), this protein is Serine--tRNA ligase.